The sequence spans 332 residues: MKQVQTKRDWKKLAYDVVEEKMIAKEDAIAILEAEDTEVLEIMNAAYIIRHHYFGKKVKLNMIINTKSGLCPEDCGYCSQSIISEAPIDKYAWLTQEKIVEGAHEAIRRKAGTYCIVASGRRPTDKEVNHVIGAVKEIRETTDLKICCCLGFLNEDQAGRLAEAGVHRYNHNLNTHANNYENICSTHTYDDRVDTVQKAKQAGISPCSGAIFGMGETIEERAEIAFELQRIDADSIPCNFLVAVKGTPLEGQKELTPVECLKVLAMMRFVNPTKEIRISGGREINLRSVQPIGLFAANSIFVGDYLTTAGQEPTADWGMIEDLGFEIEECAL.

Residues 53-282 (YFGKKVKLNM…TKEIRISGGR (230 aa)) form the Radical SAM core domain. 3 residues coordinate [4Fe-4S] cluster: Cys71, Cys75, and Cys78. The [2Fe-2S] cluster site is built by Cys115, Cys147, Cys207, and Arg277.

The protein belongs to the radical SAM superfamily. Biotin synthase family. In terms of assembly, homodimer. Requires [4Fe-4S] cluster as cofactor. It depends on [2Fe-2S] cluster as a cofactor.

The catalysed reaction is (4R,5S)-dethiobiotin + (sulfur carrier)-SH + 2 reduced [2Fe-2S]-[ferredoxin] + 2 S-adenosyl-L-methionine = (sulfur carrier)-H + biotin + 2 5'-deoxyadenosine + 2 L-methionine + 2 oxidized [2Fe-2S]-[ferredoxin]. It participates in cofactor biosynthesis; biotin biosynthesis; biotin from 7,8-diaminononanoate: step 2/2. Catalyzes the conversion of dethiobiotin (DTB) to biotin by the insertion of a sulfur atom into dethiobiotin via a radical-based mechanism. The polypeptide is Biotin synthase (Bacillus thuringiensis (strain Al Hakam)).